A 65-amino-acid chain; its full sequence is Large ribosomal subunit protein bL35 (65 aa).

The protein belongs to the bacterial ribosomal protein bL35 family.

The sequence is that of Large ribosomal subunit protein bL35 from Blochmanniella pennsylvanica (strain BPEN).